We begin with the raw amino-acid sequence, 205 residues long: Large ribosomal subunit protein bL25 (205 aa).

The tract at residues 180-205 (HEEVAEEAEETEGEDAEEAPAAEGEE) is disordered. Over residues 183-205 (VAEEAEETEGEDAEEAPAAEGEE) the composition is skewed to acidic residues.

This sequence belongs to the bacterial ribosomal protein bL25 family. CTC subfamily. Part of the 50S ribosomal subunit; part of the 5S rRNA/L5/L18/L25 subcomplex. Contacts the 5S rRNA. Binds to the 5S rRNA independently of L5 and L18.

In terms of biological role, this is one of the proteins that binds to the 5S RNA in the ribosome where it forms part of the central protuberance. In Corynebacterium diphtheriae (strain ATCC 700971 / NCTC 13129 / Biotype gravis), this protein is Large ribosomal subunit protein bL25.